A 334-amino-acid polypeptide reads, in one-letter code: MLLIGVAGTELSAQERDWLQHDAVAGVVLFKRNFASRTQVAELSAAIRAAAPRPVLVCVDQEGGRVQRFREGFSALAPLQSFGAQYAHDPESALAAARAHAQLMASEVRASGVDLSFAPVVDLGRGNRAIGDRAFSDDPQIVATFTRAYVQALHGAGMAATLKHFPGHGTVLEDTHVDHASDPRPLEVLQAEDLVPFVAGIEAGADAVMMAHVVYPQVAPEPAGYSQRWIEQILRGQMGFCGVVFSDDIGMAASFSAGGVAGRVHAHLDAGCDVVLVCHPELVAESLQAVQGRSLNTAALIGLIGRGALGWDGLLAGTDASFTTPPSAHFGTTA.

Residues Asp-60, Arg-68, Arg-133, and 163 to 164 (KH) contribute to the substrate site. The Proton donor/acceptor role is filled by His-176. Asp-247 serves as the catalytic Nucleophile.

The protein belongs to the glycosyl hydrolase 3 family. NagZ subfamily.

The protein resides in the cytoplasm. The enzyme catalyses Hydrolysis of terminal non-reducing N-acetyl-D-hexosamine residues in N-acetyl-beta-D-hexosaminides.. Its pathway is cell wall biogenesis; peptidoglycan recycling. Plays a role in peptidoglycan recycling by cleaving the terminal beta-1,4-linked N-acetylglucosamine (GlcNAc) from peptide-linked peptidoglycan fragments, giving rise to free GlcNAc, anhydro-N-acetylmuramic acid and anhydro-N-acetylmuramic acid-linked peptides. The polypeptide is Beta-hexosaminidase (Xanthomonas euvesicatoria pv. vesicatoria (strain 85-10) (Xanthomonas campestris pv. vesicatoria)).